A 688-amino-acid polypeptide reads, in one-letter code: MAKIRVYELAKELNISSKELITLLEEEFSVEVKNHMSAIEDEDADLIKELLSGKEKSEKTKEEDDEIETTAKNPIKESINNKKSNKRDDKKEKVNTENAEDMGIITMTSDTITVKEISDKLEKSYAEVIKELMLMGVMASVNQEINFEMAEKLAAKFDMEILKEDEDEEEDLEDILKDNEEEEHLQKRSPIITVMGHVDHGKTSLLDAIRKSKVTSTEAGGITQHIGAYTVELNGEAITFLDTPGHAAFTAMRARGAQVTDIVILVVAADDGIMPQTQEAISHCKAANVPLIVAINKIDRPGANIDKVKQELTEYGLVAEDWGGDTICVPVSAHTKEGIDDLLEMILLSSEILELKANPNRKAKGTVVEAKLDKGRGAVATLLIQNGTLRVGDSIVVGSTYGRIRAMFNDKGRNIKSAGPSTPVEILGLSEVPEAGDKFYQVKDEKTARGIADKRKEKIRDEYLQSTHKVSLEDLYNQIQEGTVKELGLIVKADVQGSVEALKQSLEKLSTEEVKVRVIHGGVGAINETDVTLATASNGIILGFNVRPDNNAIIASERDGVDIKTYRVIYDAIEDIKSAMLGMLEPEFKEVVIGTAEVRQVYKISSVGTIAGAYVQTGKLARNAGARVIRDGIVIFESELASLKRFKDDAKEVAQGYECGLSIEKFNDIKEGDIIECFIMEEIKKKTL.

Basic and acidic residues predominate over residues 50–62; that stretch reads LLSGKEKSEKTKE. Residues 50–95 form a disordered region; that stretch reads LLSGKEKSEKTKEEDDEIETTAKNPIKESINNKKSNKRDDKKEKVN. Residues 72-82 are compositionally biased toward low complexity; sequence KNPIKESINNK. The span at 86-95 shows a compositional bias: basic and acidic residues; the sequence is KRDDKKEKVN. The tr-type G domain maps to 187–354; that stretch reads KRSPIITVMG…MILLSSEILE (168 aa). A G1 region spans residues 196–203; the sequence is GHVDHGKT. Residue 196–203 participates in GTP binding; that stretch reads GHVDHGKT. The segment at 221-225 is G2; that stretch reads GITQH. Residues 242–245 are G3; sequence DTPG. GTP-binding positions include 242 to 246 and 296 to 299; these read DTPGH and NKID. The interval 296–299 is G4; it reads NKID. The tract at residues 332–334 is G5; sequence SAH.

It belongs to the TRAFAC class translation factor GTPase superfamily. Classic translation factor GTPase family. IF-2 subfamily.

It localises to the cytoplasm. One of the essential components for the initiation of protein synthesis. Protects formylmethionyl-tRNA from spontaneous hydrolysis and promotes its binding to the 30S ribosomal subunits. Also involved in the hydrolysis of GTP during the formation of the 70S ribosomal complex. This is Translation initiation factor IF-2 from Clostridium botulinum (strain 657 / Type Ba4).